The sequence spans 141 residues: Protein X (141 aa).

Over residues Ser-25–Ser-48 the composition is skewed to low complexity. Residues Ser-25–Asp-52 form a disordered region. Residues Pro-68–Leu-113 are mitochondrial targeting sequence.

The protein belongs to the orthohepadnavirus protein X family. As to quaternary structure, may form homodimer. May interact with host CEBPA, CFLAR, CREB1, DDB1, E4F1, HBXIP, HSPD1/HSP60, NFKBIA, POLR2E and SMAD4. Interacts with host SMC5-SMC6 complex and induces its degradation. Interacts with host TRPC4AP; leading to prevent ubiquitination of TRPC4AP. Interacts with host PLSCR1; this interaction promotes ubiquitination and degradation of HBx and impairs HBx-mediated cell proliferation. A fraction may be phosphorylated in insect cells and HepG2 cells, a human hepatoblastoma cell line. Phosphorylated in vitro by host protein kinase C or mitogen-activated protein kinase. N-acetylated in insect cells.

The protein resides in the host cytoplasm. It localises to the host nucleus. The protein localises to the host mitochondrion. Functionally, multifunctional protein that plays a role in silencing host antiviral defenses and promoting viral transcription. Does not seem to be essential for HBV infection. May be directly involved in development of cirrhosis and liver cancer (hepatocellular carcinoma). Most of cytosolic activities involve modulation of cytosolic calcium. The effect on apoptosis is controversial depending on the cell types in which the studies have been conducted. May induce apoptosis by localizing in mitochondria and causing loss of mitochondrial membrane potential. May also modulate apoptosis by binding host CFLAR, a key regulator of the death-inducing signaling complex (DISC). Promotes viral transcription by using the host E3 ubiquitin ligase DDB1 to target the SMC5-SMC6 complex to proteasomal degradation. This host complex would otherwise bind to viral episomal DNA, and prevents its transcription. Moderately stimulates transcription of many different viral and cellular transcription elements. Promoters and enhancers stimulated by HBx contain DNA binding sites for NF-kappa-B, AP-1, AP-2, c-EBP, ATF/CREB, or the calcium-activated factor NF-AT. The protein is Protein X of Marmota monax (Woodchuck).